The following is a 276-amino-acid chain: Putative pyridoxine kinase (276 aa).

Asn139 is a binding site for ATP. Glu142 contacts Mg(2+). ATP-binding positions include Lys176–Ala180, Asp188, Gly213, and Lys238.

This sequence belongs to the ThiD family.

It carries out the reaction pyridoxal + ATP = pyridoxal 5'-phosphate + ADP + H(+). In terms of biological role, phosphorylates B6 vitamers; functions in a salvage pathway. Uses pyridoxal, pyridoxine, and pyridoxamine as substrates. The sequence is that of Putative pyridoxine kinase (pdxK) from Staphylococcus epidermidis (strain ATCC 35984 / DSM 28319 / BCRC 17069 / CCUG 31568 / BM 3577 / RP62A).